The chain runs to 156 residues: Endogenous retrovirus group K member 18 Pro protein (156 aa).

In terms of domain architecture, Peptidase A2 spans 21-96; it reads LEGLVDTGAD…IPLNLWGRDL (76 aa). Asp-26 is a catalytic residue. Residues 111 to 156 enclose the G-patch domain; it reads YSPMSQKIMTKMGYIPGKGLGKNEDGIKVPIEAKINHGREGTGYPF.

The protein belongs to the peptidase A2 family. HERV class-II K(HML-2) subfamily. In terms of assembly, active as a homodimer. Post-translationally, autoproteolytically processed at the N-terminus. Expected C-terminal autoprocessing not detected. The sequence shown is that of the processed Pro protein.

It catalyses the reaction Processing at the authentic HIV-1 PR recognition site and release of the mature p17 matrix and the p24 capsid protein, as a result of the cleavage of the -SQNY-|-PIVQ- cleavage site.. Its function is as follows. Retroviral proteases have roles in the processing of the primary translation products and the maturation of the viral particle. Endogenous Pro proteins may have kept, lost or modified their original function during evolution. The sequence is that of Endogenous retrovirus group K member 18 Pro protein (ERVK-18) from Homo sapiens (Human).